The following is a 637-amino-acid chain: Threonine--tRNA ligase (637 aa).

One can recognise a TGS domain in the interval 1 to 61; sequence MPNVKLPDGN…KEDCSLIIVT (61 aa). Residues 242–533 are catalytic; the sequence is DHRKLGKALD…LIEHYAGKLP (292 aa). The Zn(2+) site is built by Cys-333, His-384, and His-510.

It belongs to the class-II aminoacyl-tRNA synthetase family. In terms of assembly, homodimer. It depends on Zn(2+) as a cofactor.

The protein resides in the cytoplasm. It catalyses the reaction tRNA(Thr) + L-threonine + ATP = L-threonyl-tRNA(Thr) + AMP + diphosphate + H(+). Functionally, catalyzes the attachment of threonine to tRNA(Thr) in a two-step reaction: L-threonine is first activated by ATP to form Thr-AMP and then transferred to the acceptor end of tRNA(Thr). Also edits incorrectly charged L-seryl-tRNA(Thr). The sequence is that of Threonine--tRNA ligase from Legionella pneumophila subsp. pneumophila (strain Philadelphia 1 / ATCC 33152 / DSM 7513).